A 1197-amino-acid chain; its full sequence is ATP-dependent helicase/nuclease subunit A (1197 aa).

The region spanning 2–458 (KNWTTEQQAA…IDLAKNFRSR (457 aa)) is the UvrD-like helicase ATP-binding domain. Residue 23 to 30 (AAAGSGKT) coordinates ATP. The 290-residue stretch at 485–774 (RAALYQGASF…RIMSIHKSKG (290 aa)) folds into the UvrD-like helicase C-terminal domain.

This sequence belongs to the helicase family. AddA subfamily. In terms of assembly, heterodimer of AddA and AddB/RexB. It depends on Mg(2+) as a cofactor.

It carries out the reaction Couples ATP hydrolysis with the unwinding of duplex DNA by translocating in the 3'-5' direction.. It catalyses the reaction ATP + H2O = ADP + phosphate + H(+). In terms of biological role, the heterodimer acts as both an ATP-dependent DNA helicase and an ATP-dependent, dual-direction single-stranded exonuclease. Recognizes the chi site generating a DNA molecule suitable for the initiation of homologous recombination. The AddA nuclease domain is required for chi fragment generation; this subunit has the helicase and 3' -&gt; 5' nuclease activities. The polypeptide is ATP-dependent helicase/nuclease subunit A (Alkaliphilus metalliredigens (strain QYMF)).